Consider the following 208-residue polypeptide: uncharacterized protein (208 aa).

Disordered regions lie at residues Met1–Glu78 and Arg154–Tyr208. The span at Lys40–Thr51 shows a compositional bias: basic residues. Over residues Ala179–Ser197 the composition is skewed to polar residues.

This is an uncharacterized protein from Caenorhabditis elegans.